Reading from the N-terminus, the 287-residue chain is Nucleotide-binding protein Ppro_0977 (287 aa).

8 to 15 (GMSGSGKS) lines the ATP pocket. 59 to 62 (DIRG) serves as a coordination point for GTP.

The protein belongs to the RapZ-like family.

Its function is as follows. Displays ATPase and GTPase activities. The polypeptide is Nucleotide-binding protein Ppro_0977 (Pelobacter propionicus (strain DSM 2379 / NBRC 103807 / OttBd1)).